The sequence spans 276 residues: MKLCGFEVGLDQPLFLIAGPCVIESMQLQLDTAGKLKEVTDKLGVNFIFKSSFDKANRTSGTAFRGPGMEEGLKVLAEVRKQIGVPVLTDVHEYTPMDEVASVVDVLQTPAFLVRQTDFIRKVCSAGKPVNIKKGQFLAPWDMKPVVEKAKATGNEQIMVCERGASFGYNNLVSDMRSLAVMRDTGCPVVFDATHSVQLPGGQGTSSGGQREHVPVLARAAVAVGISGLFAETHPDPSKALSDGPNAWPLDQMEALLETLMELDAVTKKHGFSRFA.

Belongs to the KdsA family.

The protein localises to the cytoplasm. It catalyses the reaction D-arabinose 5-phosphate + phosphoenolpyruvate + H2O = 3-deoxy-alpha-D-manno-2-octulosonate-8-phosphate + phosphate. Its pathway is carbohydrate biosynthesis; 3-deoxy-D-manno-octulosonate biosynthesis; 3-deoxy-D-manno-octulosonate from D-ribulose 5-phosphate: step 2/3. This is 2-dehydro-3-deoxyphosphooctonate aldolase from Stenotrophomonas maltophilia (strain K279a).